Consider the following 55-residue polypeptide: Large ribosomal subunit protein bL33 (55 aa).

This sequence belongs to the bacterial ribosomal protein bL33 family.

The chain is Large ribosomal subunit protein bL33 from Enterobacter sp. (strain 638).